Reading from the N-terminus, the 61-residue chain is Photosystem II reaction center protein Z (61 aa).

2 consecutive transmembrane segments (helical) span residues 5–25 (LTAL…VALA) and 38–58 (TKGF…DGVA).

The protein belongs to the PsbZ family. PSII is composed of 1 copy each of membrane proteins PsbA, PsbB, PsbC, PsbD, PsbE, PsbF, PsbH, PsbI, PsbJ, PsbK, PsbL, PsbM, PsbT, PsbX, PsbY, PsbZ, Psb30/Ycf12, at least 3 peripheral proteins of the oxygen-evolving complex and a large number of cofactors. It forms dimeric complexes.

It localises to the plastid. The protein localises to the chloroplast thylakoid membrane. May control the interaction of photosystem II (PSII) cores with the light-harvesting antenna, regulates electron flow through the 2 photosystem reaction centers. PSII is a light-driven water plastoquinone oxidoreductase, using light energy to abstract electrons from H(2)O, generating a proton gradient subsequently used for ATP formation. The chain is Photosystem II reaction center protein Z from Phaeodactylum tricornutum (strain CCAP 1055/1).